A 137-amino-acid polypeptide reads, in one-letter code: Proofreading thioesterase EntH (137 aa).

The active-site Nucleophile or proton acceptor is Glu63.

It belongs to the thioesterase PaaI family. In terms of assembly, homotetramer. Dimer of dimers. Interacts specifically with the aryl carrier protein (ArCP) domain of EntB.

Its subcellular location is the cytoplasm. Its pathway is siderophore biosynthesis; enterobactin biosynthesis. Functionally, required for optimal enterobactin synthesis. Acts as a proofreading enzyme that prevents EntB misacylation by hydrolyzing the thioester bound existing between EntB and wrongly charged molecules. This chain is Proofreading thioesterase EntH, found in Escherichia coli O6:H1 (strain CFT073 / ATCC 700928 / UPEC).